We begin with the raw amino-acid sequence, 22 residues long: Myofibril-bound serine protease (22 aa).

Positions 1-22 (IVGGYECEAYSKPYQVSINLGY) constitute a Peptidase S1 domain.

The protein belongs to the peptidase S1 family. Detected in skeletal muscle (at protein level).

The protein resides in the cytoplasm. Functionally, serine protease which degrades the myosin heavy chain and tropomyosin, but not actin. Selectively cleaves Arg-|-Xaa bonds. The polypeptide is Myofibril-bound serine protease (Saurida undosquamis (Brushtooth lizardfish)).